A 314-amino-acid polypeptide reads, in one-letter code: MSENAAPGLISELKLAVPWGHIAAKAWGSLQGPPVLCLHGWLDNASSFDRLIPLLPQDFYYVAMDFGGHGLSSHYSPGVPYYLQTFVSEIRRVVAALKWNRFSILGHSFGGVVGGMFFCTFPEMVDKLILLDTPLFLLESDEMENLLTYKRRAIEHVLQVEASQEPSHVFSLKQLLQRLLKSNSHLSEECGELLLQRGTTKVATGLVLNRDQRLAWAENSIDFISRELCAHSIRKLQAHVLLIKAVHGYFDSRQNYSEKESLSFMIDTMKSTLKEQFQFVEVPGNHCVHMSEPQHVASIISSFLQCTHMLPAQL.

Residues 33–293 enclose the AB hydrolase-1 domain; sequence PPVLCLHGWL…GNHCVHMSEP (261 aa). Ser108 is a catalytic residue.

The protein belongs to the AB hydrolase superfamily.

The protein resides in the cytoplasm. Its subcellular location is the perinuclear region. It localises to the peroxisome. Its function is as follows. Probable serine hydrolase. May be related to cell muscle hypertrophy. The protein is Serine hydrolase-like protein 2 (SERHL2) of Homo sapiens (Human).